A 101-amino-acid chain; its full sequence is Small ribosomal subunit protein uS14 (101 aa).

It belongs to the universal ribosomal protein uS14 family. Part of the 30S ribosomal subunit. Contacts proteins S3 and S10.

Its function is as follows. Binds 16S rRNA, required for the assembly of 30S particles and may also be responsible for determining the conformation of the 16S rRNA at the A site. The chain is Small ribosomal subunit protein uS14 from Cronobacter sakazakii (strain ATCC BAA-894) (Enterobacter sakazakii).